A 1072-amino-acid chain; its full sequence is DNA-directed RNA polymerase subunit beta (1072 aa).

This sequence belongs to the RNA polymerase beta chain family. In plastids the minimal PEP RNA polymerase catalytic core is composed of four subunits: alpha, beta, beta', and beta''. When a (nuclear-encoded) sigma factor is associated with the core the holoenzyme is formed, which can initiate transcription.

It localises to the plastid. The protein resides in the chloroplast. The catalysed reaction is RNA(n) + a ribonucleoside 5'-triphosphate = RNA(n+1) + diphosphate. Functionally, DNA-dependent RNA polymerase catalyzes the transcription of DNA into RNA using the four ribonucleoside triphosphates as substrates. The protein is DNA-directed RNA polymerase subunit beta of Nasturtium officinale (Watercress).